Here is a 321-residue protein sequence, read N- to C-terminus: MLHLRYEYLLAIVKAIVTLLSVVTIGAYMSFFERRLLGLFQHRYGPNRVGWGGSLQLLADTIKILFKEDWIPPFADRIIFTLAPIIAFTSLLLVFAIMPISPNWVVIELNIGILFFLMMAGISVYAILLGGWSSNNKYSLLGAMRAAAQTLSYEVFLGLSIMGVVAQAGSFNISTIVADQTHIWNIVPQFFGFITFYLAGLAICHRHPFDQPESEQELADGYHIEYSGMKFGLFFIGEYISLVTISALTITLFFGGWQGPWLPPYIWFIIKTTVFIIIFILIRAALPRPRYDQVMILGWTICLPLTLMNLLVTAIVILYNT.

The next 8 helical transmembrane spans lie at 9–29 (LLAI…GAYM), 78–98 (IIFT…FAIM), 111–131 (IGIL…LLGG), 156–176 (FLGL…ISTI), 183–203 (IWNI…GLAI), 234–254 (FFIG…TLFF), 262–282 (LPPY…FILI), and 296–316 (ILGW…TAIV).

The protein belongs to the complex I subunit 1 family. In terms of assembly, NDH-1 is composed of 14 different subunits. Subunits NuoA, H, J, K, L, M, N constitute the membrane sector of the complex.

Its subcellular location is the cell membrane. It catalyses the reaction a quinone + NADH + 5 H(+)(in) = a quinol + NAD(+) + 4 H(+)(out). Its function is as follows. NDH-1 shuttles electrons from NADH, via FMN and iron-sulfur (Fe-S) centers, to quinones in the respiratory chain. The immediate electron acceptor for the enzyme in this species is believed to be ubiquinone. Couples the redox reaction to proton translocation (for every two electrons transferred, four hydrogen ions are translocated across the cytoplasmic membrane), and thus conserves the redox energy in a proton gradient. This subunit may bind ubiquinone. This chain is NADH-quinone oxidoreductase subunit H, found in Baumannia cicadellinicola subsp. Homalodisca coagulata.